Consider the following 494-residue polypeptide: 2,3-bisphosphoglycerate-independent phosphoglycerate mutase (494 aa).

Residues aspartate 12 and serine 62 each contribute to the Mn(2+) site. Residue serine 62 is the Phosphoserine intermediate of the active site. Residues histidine 121, 150-151, arginine 181, arginine 187, 252-255, and lysine 317 contribute to the substrate site; these read RD and RSDR. Aspartate 384, histidine 388, aspartate 425, histidine 426, and histidine 443 together coordinate Mn(2+).

Belongs to the BPG-independent phosphoglycerate mutase family. As to quaternary structure, monomer. Mn(2+) serves as cofactor.

The catalysed reaction is (2R)-2-phosphoglycerate = (2R)-3-phosphoglycerate. The protein operates within carbohydrate degradation; glycolysis; pyruvate from D-glyceraldehyde 3-phosphate: step 3/5. Functionally, catalyzes the interconversion of 2-phosphoglycerate and 3-phosphoglycerate. The chain is 2,3-bisphosphoglycerate-independent phosphoglycerate mutase from Anaplasma marginale (strain St. Maries).